Consider the following 418-residue polypeptide: Triacylglycerol lipase 2 (418 aa).

The N-terminal stretch at 1–31 is a signal peptide; the sequence is MAGSVMVPSVSIGLALSVLIFFALSLKTLEA. N-linked (GlcNAc...) asparagine glycosylation is present at Asn158. Ser190 serves as the catalytic Nucleophile. Asn286 and Asn342 each carry an N-linked (GlcNAc...) asparagine glycan. Catalysis depends on charge relay system residues Asp360 and His393.

The protein belongs to the AB hydrolase superfamily. Lipase family.

The protein resides in the secreted. The enzyme catalyses a triacylglycerol + H2O = a diacylglycerol + a fatty acid + H(+). Its function is as follows. Triacylglycerol (TAG) lipase. May be involved for TAG storage breakdown during seed germination. In Arabidopsis thaliana (Mouse-ear cress), this protein is Triacylglycerol lipase 2 (LIP2).